We begin with the raw amino-acid sequence, 216 residues long: Protein InaA (216 aa).

The protein belongs to the protein kinase superfamily. KdkA/RfaP family.

May be an environmental sensor responsive to several stimuli, including internal pH, proton motive force, temperature, and possibly other unknown factors. The chain is Protein InaA (inaA) from Escherichia coli (strain K12).